Reading from the N-terminus, the 669-residue chain is uncharacterized protein (669 aa).

12 consecutive transmembrane segments (helical) span residues 9-29, 48-68, 87-107, 139-159, 186-206, 224-244, 259-279, 314-334, 345-365, 397-417, 444-464, and 470-490; these read PLVI…IFIA, FSWF…ILSV, FLSW…MFFG, WGIH…YFGF, AIDV…LGFG, SFAL…FSAI, LTLA…LYLL, WTVL…LFIA, FIFG…TVFG, YLPL…LFFI, AIMW…SGGL, and MTLI…FSLW.

This sequence belongs to the BCCT transporter (TC 2.A.15) family.

It is found in the cell inner membrane. This is an uncharacterized protein from Haemophilus influenzae (strain ATCC 51907 / DSM 11121 / KW20 / Rd).